Reading from the N-terminus, the 389-residue chain is 23S rRNA (uracil(747)-C(5))-methyltransferase RlmC (389 aa).

[4Fe-4S] cluster is bound by residues Cys6, Cys14, Cys17, and Cys92. S-adenosyl-L-methionine contacts are provided by Gln217, Phe246, Glu273, and Asn319. Residue Cys346 is the Nucleophile of the active site.

It belongs to the class I-like SAM-binding methyltransferase superfamily. RNA M5U methyltransferase family. RlmC subfamily.

The enzyme catalyses uridine(747) in 23S rRNA + S-adenosyl-L-methionine = 5-methyluridine(747) in 23S rRNA + S-adenosyl-L-homocysteine + H(+). Its function is as follows. Catalyzes the formation of 5-methyl-uridine at position 747 (m5U747) in 23S rRNA. The protein is 23S rRNA (uracil(747)-C(5))-methyltransferase RlmC of Glaesserella parasuis serovar 5 (strain SH0165) (Haemophilus parasuis).